The primary structure comprises 185 residues: ATP-dependent protease subunit HslV (185 aa).

Residue Thr12 is part of the active site. The Na(+) site is built by Ser168, Cys171, and Thr174.

The protein belongs to the peptidase T1B family. HslV subfamily. As to quaternary structure, a double ring-shaped homohexamer of HslV is capped on each side by a ring-shaped HslU homohexamer. The assembly of the HslU/HslV complex is dependent on binding of ATP.

The protein resides in the cytoplasm. It catalyses the reaction ATP-dependent cleavage of peptide bonds with broad specificity.. Allosterically activated by HslU binding. Protease subunit of a proteasome-like degradation complex believed to be a general protein degrading machinery. The protein is ATP-dependent protease subunit HslV of Jannaschia sp. (strain CCS1).